Consider the following 477-residue polypeptide: Fibrinogen beta chain (477 aa).

Residues 1-76 (EDLSLVGQPE…ASPRPQEAQK (76 aa)) are disordered. Tyrosine 13 carries the post-translational modification Sulfotyrosine. Asparagine 27 carries an N-linked (GlcNAc...) asparagine glycan. Residues 44–55 (RVRRPPLRHRRL) show a composition bias toward basic residues. Cystine bridges form between cysteine 220-cysteine 304, cysteine 230-cysteine 259, and cysteine 412-cysteine 425. The Fibrinogen C-terminal domain occupies 221–476 (RVPVVSGMHC…QMAMKLRPKW (256 aa)).

As to quaternary structure, heterohexamer; disulfide linked. Contains 2 sets of 3 non-identical chains (alpha, beta and gamma). The 2 heterotrimers are in head to head conformation with the N-termini in a small central domain. Post-translationally, conversion of fibrinogen to fibrin is triggered by thrombin, which cleaves fibrinopeptides A and B from alpha and beta chains, and thus exposes the N-terminal polymerization sites responsible for the formation of the soft clot. The soft clot is converted into the hard clot by factor XIIIA which catalyzes the epsilon-(gamma-glutamyl)lysine cross-linking between gamma chains (stronger) and between alpha chains (weaker) of different monomers.

It localises to the secreted. Functionally, fibrinogen has a double function: yielding monomers that polymerize into fibrin and acting as a cofactor in platelet aggregation. This is Fibrinogen beta chain from Petromyzon marinus (Sea lamprey).